Here is a 406-residue protein sequence, read N- to C-terminus: Probable endo-xylogalacturonan hydrolase A (406 aa).

An N-terminal signal peptide occupies residues 1-18 (MISLNSIFLLSLVGLSRA). A disordered region spans residues 20–49 (PSRSETSPDRTIKPRAACTPTAGGSSSTDD). 6 PbH1 repeats span residues 183-213 (TSNA…DIGA), 214-235 (STYV…AFKP), 237-257 (ANYV…SVGS), 266-289 (VQNV…KTYP), 299-320 (VKNA…QIQS), and 368-390 (TCDV…ILCG). The Proton donor role is filled by D228. N-linked (GlcNAc...) asparagine glycosylation is present at N244. Residue H251 is part of the active site. N273, N278, and N301 each carry an N-linked (GlcNAc...) asparagine glycan.

Belongs to the glycosyl hydrolase 28 family.

Its subcellular location is the secreted. In terms of biological role, pectinolytic enzyme involved in the degradation of xylogalacturonan (xga), a galacturonan backbone heavily substituted with xylose, and which is one important component of the hairy regions of pectin. Activity requires a galacturonic acid backbone substituted with xylose. This chain is Probable endo-xylogalacturonan hydrolase A (xghA), found in Aspergillus flavus (strain ATCC 200026 / FGSC A1120 / IAM 13836 / NRRL 3357 / JCM 12722 / SRRC 167).